Here is a 503-residue protein sequence, read N- to C-terminus: Aspartyl/glutamyl-tRNA(Asn/Gln) amidotransferase subunit B (503 aa).

It belongs to the GatB/GatE family. GatB subfamily. In terms of assembly, heterotrimer of A, B and C subunits.

It catalyses the reaction L-glutamyl-tRNA(Gln) + L-glutamine + ATP + H2O = L-glutaminyl-tRNA(Gln) + L-glutamate + ADP + phosphate + H(+). The enzyme catalyses L-aspartyl-tRNA(Asn) + L-glutamine + ATP + H2O = L-asparaginyl-tRNA(Asn) + L-glutamate + ADP + phosphate + 2 H(+). Its function is as follows. Allows the formation of correctly charged Asn-tRNA(Asn) or Gln-tRNA(Gln) through the transamidation of misacylated Asp-tRNA(Asn) or Glu-tRNA(Gln) in organisms which lack either or both of asparaginyl-tRNA or glutaminyl-tRNA synthetases. The reaction takes place in the presence of glutamine and ATP through an activated phospho-Asp-tRNA(Asn) or phospho-Glu-tRNA(Gln). The sequence is that of Aspartyl/glutamyl-tRNA(Asn/Gln) amidotransferase subunit B from Cereibacter sphaeroides (strain ATCC 17029 / ATH 2.4.9) (Rhodobacter sphaeroides).